The following is a 226-amino-acid chain: N-(5'-phosphoribosyl)anthranilate isomerase (226 aa).

The protein belongs to the TrpF family.

It catalyses the reaction N-(5-phospho-beta-D-ribosyl)anthranilate = 1-(2-carboxyphenylamino)-1-deoxy-D-ribulose 5-phosphate. Its pathway is amino-acid biosynthesis; L-tryptophan biosynthesis; L-tryptophan from chorismate: step 3/5. The protein is N-(5'-phosphoribosyl)anthranilate isomerase (TRP1) of Candida albicans (strain SC5314 / ATCC MYA-2876) (Yeast).